Consider the following 590-residue polypeptide: Potassium-transporting ATPase potassium-binding subunit (590 aa).

The next 4 membrane-spanning stretches (helical) occupy residues 3-23, 63-83, 134-154, and 177-197; these read AFLLQLAIYLAVLLVLARPLG, HYALAVIAVNVLGALAVYALQ, GLAVQNFLSAATGIAVVIALI, and LYVLLPLSVIVAVFFVSQGAI. Positions 217–244 are disordered; the sequence is PKTDAQGNPIKDAQGNPVTEKATTQKQT. 8 helical membrane-spanning segments follow: residues 284-304, 312-332, 359-379, 388-408, 411-431, 450-470, 515-535, and 558-578; these read FVQMLSIFLIPAALCFTFGAM, WAVLASMTILFVVLAVFEMWA, FGVVASSLFVTITTAASCGAV, ALGGFVPMFLIQLGEVVFGGV, GLYGMLVYAILAVFIAGLMIG, SIAILVTPLLVLVGTAVAVLA, VALGIVMWLGRFWIIVPVLAM, and LFVVLLIGSVLLVGALTYIPA.

Belongs to the KdpA family. In terms of assembly, the system is composed of three essential subunits: KdpA, KdpB and KdpC.

It localises to the cell inner membrane. Its function is as follows. Part of the high-affinity ATP-driven potassium transport (or Kdp) system, which catalyzes the hydrolysis of ATP coupled with the electrogenic transport of potassium into the cytoplasm. This subunit binds the periplasmic potassium ions and delivers the ions to the membrane domain of KdpB through an intramembrane tunnel. This chain is Potassium-transporting ATPase potassium-binding subunit, found in Ralstonia nicotianae (strain ATCC BAA-1114 / GMI1000) (Ralstonia solanacearum).